Here is a 367-residue protein sequence, read N- to C-terminus: MKKSKIAAGVVVALAAVWCTSAWFTGKKAEEEYLYQLEQLNQLFTKTEALEESKIFYKNIKFERGLFASHIQDQIEIHKANETIIIPLSSTLYHGPLPLDRVAKLNFVPAIFSSQTLLGKNATTQAFFDITESEKPLQLNFAMNYSLSGNAELKLASGQYHNEQSKTDFDWSNVVLNIDLNQNTPNNYVLSVDTFNSNAPNHAVSTASSIKIKDLVVQGSLQSTKWPFIYSGNINSKIGYFEQNTESAESGEKFSLIQKNSQANLTTQVEGDTVNIINKTNLDELHINGNNLGKVTNNVEFNHIDGNALQELLNILVAIGKADSECLYLKHWCKNYNKQAWPLRIISLKLSLPLFLFLMKKAKWHWI.

The chain crosses the membrane as a helical span at residues 6-26 (IAAGVVVALAAVWCTSAWFTG).

To E.coli YdgA and YihF.

The protein resides in the membrane. This is an uncharacterized protein from Haemophilus influenzae (strain ATCC 51907 / DSM 11121 / KW20 / Rd).